We begin with the raw amino-acid sequence, 262 residues long: Acyl-[acyl-carrier-protein]--UDP-N-acetylglucosamine O-acyltransferase (262 aa).

The protein belongs to the transferase hexapeptide repeat family. LpxA subfamily. As to quaternary structure, homotrimer.

Its subcellular location is the cytoplasm. It catalyses the reaction a (3R)-hydroxyacyl-[ACP] + UDP-N-acetyl-alpha-D-glucosamine = a UDP-3-O-[(3R)-3-hydroxyacyl]-N-acetyl-alpha-D-glucosamine + holo-[ACP]. It functions in the pathway glycolipid biosynthesis; lipid IV(A) biosynthesis; lipid IV(A) from (3R)-3-hydroxytetradecanoyl-[acyl-carrier-protein] and UDP-N-acetyl-alpha-D-glucosamine: step 1/6. In terms of biological role, involved in the biosynthesis of lipid A, a phosphorylated glycolipid that anchors the lipopolysaccharide to the outer membrane of the cell. This is Acyl-[acyl-carrier-protein]--UDP-N-acetylglucosamine O-acyltransferase from Sodalis glossinidius (strain morsitans).